The chain runs to 157 residues: MALIPKEVFFVSGVGRHEDELVSFELALRDAGIERFNLVPVSSIVPPGCRVVSKEEGLRKLSPGQIVFCVMARYASNVEGREIFASVGAAFPEDKDMNGYIAEHSGEWYEGAEQHAKRLAEEMLKTQGSKVARTFAITARGKVKEFTTAVAAAVFVI.

The residue at position 43 (serine 43) is a Pyruvic acid (Ser).

Belongs to the PdaD family. Requires pyruvate as cofactor.

The catalysed reaction is L-arginine + H(+) = agmatine + CO2. The sequence is that of Pyruvoyl-dependent arginine decarboxylase 2 (pdaD2) from Archaeoglobus fulgidus (strain ATCC 49558 / DSM 4304 / JCM 9628 / NBRC 100126 / VC-16).